A 233-amino-acid polypeptide reads, in one-letter code: 5'-methylthioadenosine/S-adenosylhomocysteine nucleosidase (233 aa).

The active-site Proton acceptor is Glu-12. Substrate is bound by residues Gly-78, Ile-152, and 173-174 (ME). The Proton donor role is filled by Asp-197.

The protein belongs to the PNP/UDP phosphorylase family. MtnN subfamily. Homodimer.

The catalysed reaction is S-adenosyl-L-homocysteine + H2O = S-(5-deoxy-D-ribos-5-yl)-L-homocysteine + adenine. It catalyses the reaction S-methyl-5'-thioadenosine + H2O = 5-(methylsulfanyl)-D-ribose + adenine. The enzyme catalyses 5'-deoxyadenosine + H2O = 5-deoxy-D-ribose + adenine. It functions in the pathway amino-acid biosynthesis; L-methionine biosynthesis via salvage pathway; S-methyl-5-thio-alpha-D-ribose 1-phosphate from S-methyl-5'-thioadenosine (hydrolase route): step 1/2. Functionally, catalyzes the irreversible cleavage of the glycosidic bond in both 5'-methylthioadenosine (MTA) and S-adenosylhomocysteine (SAH/AdoHcy) to adenine and the corresponding thioribose, 5'-methylthioribose and S-ribosylhomocysteine, respectively. Also cleaves 5'-deoxyadenosine, a toxic by-product of radical S-adenosylmethionine (SAM) enzymes, into 5-deoxyribose and adenine. Thus, is required for in vivo function of the radical SAM enzymes biotin synthase and lipoic acid synthase, that are inhibited by 5'-deoxyadenosine accumulation. The sequence is that of 5'-methylthioadenosine/S-adenosylhomocysteine nucleosidase from Yersinia enterocolitica serotype O:8 / biotype 1B (strain NCTC 13174 / 8081).